The chain runs to 347 residues: Isopentenyl-diphosphate delta-isomerase (347 aa).

9-10 (RK) is a binding site for substrate. Residues 65–67 (AMT), Ser-95, and Asn-124 each bind FMN. Residue 95–97 (STH) participates in substrate binding. Gln-154 is a binding site for substrate. Residue Glu-155 coordinates Mg(2+). FMN contacts are provided by residues Lys-186, Ser-211, Thr-216, 262 to 264 (GVR), and 283 to 284 (SR).

Belongs to the IPP isomerase type 2 family. In terms of assembly, homooctamer. Dimer of tetramers. FMN serves as cofactor. The cofactor is NADPH. Mg(2+) is required as a cofactor.

The protein resides in the cytoplasm. It carries out the reaction isopentenyl diphosphate = dimethylallyl diphosphate. In terms of biological role, involved in the biosynthesis of isoprenoids. Catalyzes the 1,3-allylic rearrangement of the homoallylic substrate isopentenyl (IPP) to its allylic isomer, dimethylallyl diphosphate (DMAPP). The sequence is that of Isopentenyl-diphosphate delta-isomerase from Staphylococcus saprophyticus subsp. saprophyticus (strain ATCC 15305 / DSM 20229 / NCIMB 8711 / NCTC 7292 / S-41).